A 730-amino-acid chain; its full sequence is Catalase-peroxidase (730 aa).

The disordered stretch occupies residues 1–21 (MTENKCPVTGKMSKATAGSGT). The tryptophyl-tyrosyl-methioninium (Trp-Tyr) (with M-244) cross-link spans 95–218 (WHSAGTYRVG…LAAVQMGLIY (124 aa)). His-96 functions as the Proton acceptor in the catalytic mechanism. A cross-link (tryptophyl-tyrosyl-methioninium (Tyr-Met) (with W-95)) is located at residues 218 to 244 (YVNPEGPNGNPDPLGSAHDVRETFARM). Position 259 (His-259) interacts with heme b.

Belongs to the peroxidase family. Peroxidase/catalase subfamily. Homodimer or homotetramer. It depends on heme b as a cofactor. In terms of processing, formation of the three residue Trp-Tyr-Met cross-link is important for the catalase, but not the peroxidase activity of the enzyme.

The enzyme catalyses H2O2 + AH2 = A + 2 H2O. It catalyses the reaction 2 H2O2 = O2 + 2 H2O. Bifunctional enzyme with both catalase and broad-spectrum peroxidase activity. In Clostridium botulinum (strain Alaska E43 / Type E3), this protein is Catalase-peroxidase.